Here is a 269-residue protein sequence, read N- to C-terminus: Tryptophan synthase alpha chain (269 aa).

Active-site proton acceptor residues include E49 and D60.

It belongs to the TrpA family. Tetramer of two alpha and two beta chains.

The enzyme catalyses (1S,2R)-1-C-(indol-3-yl)glycerol 3-phosphate + L-serine = D-glyceraldehyde 3-phosphate + L-tryptophan + H2O. It participates in amino-acid biosynthesis; L-tryptophan biosynthesis; L-tryptophan from chorismate: step 5/5. Its function is as follows. The alpha subunit is responsible for the aldol cleavage of indoleglycerol phosphate to indole and glyceraldehyde 3-phosphate. The sequence is that of Tryptophan synthase alpha chain from Acidovorax ebreus (strain TPSY) (Diaphorobacter sp. (strain TPSY)).